The chain runs to 214 residues: Protein PsaE (214 aa).

An N-terminal signal peptide occupies residues 1–24; the sequence is MSHCVVLNKLESVLIIGDSRYALS. Positions 1 to 94 form a DNA-binding region, ompR/PhoB-type; that stretch reads MSHCVVLNKL…YKNEGYSYQK (94 aa).

In terms of biological role, required for expression of pH 6 antigen. This Yersinia pseudotuberculosis serotype I (strain IP32953) protein is Protein PsaE (psaE).